Consider the following 165-residue polypeptide: 6,7-dimethyl-8-ribityllumazine synthase (165 aa).

5-amino-6-(D-ribitylamino)uracil-binding positions include Trp-26, 57-59, and 79-81; these read SVE and VVV. Residue 84–85 coordinates (2S)-2-hydroxy-3-oxobutyl phosphate; sequence AT. The Proton donor role is filled by His-87. Residue His-112 coordinates 5-amino-6-(D-ribitylamino)uracil. Residue Arg-126 participates in (2S)-2-hydroxy-3-oxobutyl phosphate binding.

Belongs to the DMRL synthase family.

The catalysed reaction is (2S)-2-hydroxy-3-oxobutyl phosphate + 5-amino-6-(D-ribitylamino)uracil = 6,7-dimethyl-8-(1-D-ribityl)lumazine + phosphate + 2 H2O + H(+). The protein operates within cofactor biosynthesis; riboflavin biosynthesis; riboflavin from 2-hydroxy-3-oxobutyl phosphate and 5-amino-6-(D-ribitylamino)uracil: step 1/2. Functionally, catalyzes the formation of 6,7-dimethyl-8-ribityllumazine by condensation of 5-amino-6-(D-ribitylamino)uracil with 3,4-dihydroxy-2-butanone 4-phosphate. This is the penultimate step in the biosynthesis of riboflavin. The chain is 6,7-dimethyl-8-ribityllumazine synthase from Salinispora arenicola (strain CNS-205).